Reading from the N-terminus, the 331-residue chain is MLVLGIESTAHTFGVGIAKDQPPYILANERDTFVPKEGGMKPGDLLKHHAEVSGTILRRALEKANISINDINYIAVALGPGIGPALRVGATLARALSLKYNKKLVPVNHGIGHIEIGYLTTEAKDPLILYLSGGNTIITTFYKGRFRIFGETLDIALGNMMDVFVREVNLAPPYIINGKHAIDICSEKGSKLLKLPYVVKGQDMSFSGLLTAALRLVGKEKLEDICYSIREIAFDMLLEATERALALTSKKELMIVGGVAASVSLRKKLEELGKEWDVQIKIVPPEFAGDNGAMIAYAGMLAASKGVFIDVDKSYIRPRWRVDEVDIPWRN.

Positions 109, 113, and 130 each coordinate Fe cation. Substrate contacts are provided by residues 130-134 (YLSGG), Asp162, Asp183, and Ser262. Fe cation is bound at residue Asp290.

Belongs to the KAE1 / TsaD family. Fe(2+) is required as a cofactor.

Its subcellular location is the cytoplasm. The catalysed reaction is L-threonylcarbamoyladenylate + adenosine(37) in tRNA = N(6)-L-threonylcarbamoyladenosine(37) in tRNA + AMP + H(+). Functionally, required for the formation of a threonylcarbamoyl group on adenosine at position 37 (t(6)A37) in tRNAs that read codons beginning with adenine. Is probably involved in the transfer of the threonylcarbamoyl moiety of threonylcarbamoyl-AMP (TC-AMP) to the N6 group of A37. This is tRNA N6-adenosine threonylcarbamoyltransferase from Saccharolobus islandicus (strain Y.G.57.14 / Yellowstone #1) (Sulfolobus islandicus).